We begin with the raw amino-acid sequence, 535 residues long: MIITTPRRANMSSESGSSASTVHYAKPVLRHVPMPSSTTPSSIGSSSSSSSSYASSTKQTPPRSPVIRYPTVVVSKNSIATPSSSLTPQGTPSYAVPVSRNQMQYSASKLQYEHMRHRCKMLDDENQKLMRMQSDVVNDANRRVQMHVNEIRMLKEDNRKLAISNKELRDLSCFLDDDRQKTRKLAREWQKFGRYTSSLMKQEVDSYHQKMVSIEEKLCTKEREVDELRQLCMYLDEQRQSLMSNAAANVDCDNESEDLGCGSSEQSGGSEGHNDEEKHHEFNKCFNKHKESTLRRIMATSMCSEPSEEEERREVSKRERSRLLGYIQSLENRIKHLEMSQNHESFWNSSSNVGSDCDEKTIIERGWLGEEVMSNSEDCHLELKPVMTTSSTSSSHIFGNDKCPMFDSMTSNMTSSGCTTYASSGTDGDSVFVIGDEIDIGNLEVRTLSRIDEEATSASDTLKESARMPPKIAPPICSSLVLTNFDNMSEDCAPRLMRSASETCRPTTTLISSTQPAQRSVSVEKNNNNNVHTHN.

The segment at 1–67 (MIITTPRRAN…KQTPPRSPVI (67 aa)) is disordered. Over residues 36-57 (SSTTPSSIGSSSSSSSSYASST) the composition is skewed to low complexity. Coiled coils occupy residues 109-172 (KLQY…RDLS) and 198-242 (SLMK…RQSL). Disordered stretches follow at residues 254 to 277 (NESE…NDEE) and 503 to 535 (TCRP…HTHN). Positions 503–525 (TCRPTTTLISSTQPAQRSVSVEK) are enriched in polar residues. A compositionally biased stretch (low complexity) spans 526–535 (NNNNNVHTHN).

It belongs to the CCDC85 family. In terms of assembly, interacts with pac-1 and jac-1.

The protein resides in the cell junction. It is found in the adherens junction. Linker protein which helps to recruit the Rho GTPase-activating protein, pac-1, to adherens junctions. In Caenorhabditis elegans, this protein is PAC-1 interacting and coiled-coil domain-containing protein 1.